We begin with the raw amino-acid sequence, 381 residues long: Cyclic AMP-AMP-GMP synthase (381 aa).

Residues Gln51, Ser53, Arg56, Asp69, Asp71, and Arg109 each contribute to the ATP site. Residues Asp69 and Asp71 contribute to the active site. Mg(2+) is bound by residues Asp69 and Asp71. The active site involves Asp121. Positions 121 and 196 each coordinate Mg(2+). Positions 196, 197, 204, 205, 210, 233, and 250 each coordinate ATP. Mg(2+)-binding residues include Asn258 and Leu260. ATP is bound by residues Val304 and Arg307. Positions 348–381 are disordered; that stretch reads GSKFPLPGPQGGDRNGGFTTPSKPAEPQKTGRFA.

Belongs to the CD-NTase family. D02 subfamily. As to quaternary structure, monomer. Crystallizes as a Cap2 homodimer bound on each side by a CdnD monomer. Mg(2+) is required as a cofactor. In terms of processing, in bacteria expressing cap4-dncV-cap2-cap3, this protein is conjugated to a number of other proteins by Cap2, probably via this protein's C-terminal Ala residue. More conjugated DncV is found in the absence of Cap3.

It catalyses the reaction GTP + 2 ATP = 3',3',3'-cAAG + 3 diphosphate. Primed for activation by Cap2 which conjugates it to cellular proteins; activation is target protein-specific (green fluorescent protein does not activate the enzyme), but which protein(s) activate it is unclear. In terms of biological role, cyclic nucleotide synthase (second messenger synthase) of a CBASS antivirus system. CBASS (cyclic oligonucleotide-based antiphage signaling system) provides immunity against bacteriophages. The CD-NTase protein (CdnD, this protein) synthesizes cyclic nucleotides in response to infection; these serve as specific second messenger signals. The signals activate a diverse range of effectors, leading to bacterial cell death and thus abortive phage infection. A type II-C(AAG) CBASS system. Cyclic trinucleotide synthase that catalyzes the synthesis of 3',3',3'-cyclic AMP-AMP-GMP (cAAG) as the major product, a second messenger for cell signal transduction. Uses ATP as the first donor nucleotide, followed by GTP. Its function is as follows. Protects E.coli against phage T2 infection. When the cdnD-cap2-cap3-cap4 operon is introduced in E.coli there is a more than 10(3) decrease in the efficiency of T2 plaque formation. The operon does not protect against phage T5 and only about 10-fold against T7. Expression of cdnD-cap4 alone protects E.coli against phage T2 infection. This chain is Cyclic AMP-AMP-GMP synthase, found in Enterobacter hormaechei subsp. hoffmannii (strain UCI 50).